The following is a 177-amino-acid chain: MSRVGKMPIALPSGAEATITAEQITVKGPLGSLSQALNGLVQIENASGTLNFKPANDSREANAMSGTLRALVNNMVNGVTKGFEKKLMLVGVGFRAAAQGDKLNLSLGFSHPVVHAMPAGIKVETPTQTEILIKGIDRQSVGQVAAEVRAYRPPEPYKGKGVRYSDEVVVIKETKKK.

The protein belongs to the universal ribosomal protein uL6 family. As to quaternary structure, part of the 50S ribosomal subunit.

In terms of biological role, this protein binds to the 23S rRNA, and is important in its secondary structure. It is located near the subunit interface in the base of the L7/L12 stalk, and near the tRNA binding site of the peptidyltransferase center. In Herminiimonas arsenicoxydans, this protein is Large ribosomal subunit protein uL6.